The primary structure comprises 135 residues: Large ribosomal subunit protein uL16c (135 aa).

Belongs to the universal ribosomal protein uL16 family. In terms of assembly, part of the 50S ribosomal subunit.

The protein resides in the plastid. It localises to the chloroplast. The polypeptide is Large ribosomal subunit protein uL16c (Panax ginseng (Korean ginseng)).